Consider the following 364-residue polypeptide: Aminomethyltransferase (364 aa).

The protein belongs to the GcvT family. As to quaternary structure, the glycine cleavage system is composed of four proteins: P, T, L and H.

The enzyme catalyses N(6)-[(R)-S(8)-aminomethyldihydrolipoyl]-L-lysyl-[protein] + (6S)-5,6,7,8-tetrahydrofolate = N(6)-[(R)-dihydrolipoyl]-L-lysyl-[protein] + (6R)-5,10-methylene-5,6,7,8-tetrahydrofolate + NH4(+). The glycine cleavage system catalyzes the degradation of glycine. The protein is Aminomethyltransferase of Shewanella loihica (strain ATCC BAA-1088 / PV-4).